The following is a 671-amino-acid chain: ABC transporter ATP-binding protein/permease wht-1 (671 aa).

Residues 1–408 (MHKAPISTLI…SWLTVIRDPN (408 aa)) are Cytoplasmic-facing. Residues 64 to 310 (TNFVDRFRNN…FEKCGYPCPA (247 aa)) enclose the ABC transporter domain. 100 to 107 (GSSGAGKT) contacts ATP. A helical transmembrane segment spans residues 409 to 429 (LLSVRLLQILITAFITGIVFF). Residues 430-451 (QTPVTPATIISINGIMFNHIRN) lie on the Extracellular side of the membrane. The chain crosses the membrane as a helical span at residues 452–472 (MNFMLQFPNVPVITAELPIVL). The Cytoplasmic portion of the chain corresponds to 473–497 (RENANGVYRTSAYFLAKNIAELPQY). The helical transmembrane segment at 498–518 (IILPILYNTIVYWMSGLYPNF) threads the bilayer. Residues 519 to 525 (WNYCFAS) are Extracellular-facing. Residues 526–546 (LVTILITNVAISISYAVATIF) form a helical membrane-spanning segment. The Cytoplasmic segment spans residues 547 to 550 (ANTD). A helical membrane pass occupies residues 551 to 571 (VAMTILPIFVVPIMAFGGFFI). The Extracellular segment spans residues 572–644 (TFDAIPSYFK…DFSASHKIFD (73 aa)). Residues 645–665 (ISILFGMFIGIRIIAYVALLI) form a helical membrane-spanning segment. Residues 666 to 671 (RSYNNT) lie on the Cytoplasmic side of the membrane.

This sequence belongs to the ABC transporter superfamily. ABCG family. Eye pigment precursor importer (TC 3.A.1.204) subfamily. As to expression, expressed in the intestine in both larvae and adults. Expressed in the gut of males.

Its subcellular location is the membrane. In terms of biological role, required for efficient RNA interference (RNAi). Plays a role in germline development. This Caenorhabditis elegans protein is ABC transporter ATP-binding protein/permease wht-1.